A 569-amino-acid chain; its full sequence is 2-succinyl-5-enolpyruvyl-6-hydroxy-3-cyclohexene-1-carboxylate synthase (569 aa).

Belongs to the TPP enzyme family. MenD subfamily. As to quaternary structure, homodimer. Requires Mg(2+) as cofactor. The cofactor is Mn(2+). Thiamine diphosphate serves as cofactor.

The catalysed reaction is isochorismate + 2-oxoglutarate + H(+) = 5-enolpyruvoyl-6-hydroxy-2-succinyl-cyclohex-3-ene-1-carboxylate + CO2. It participates in quinol/quinone metabolism; 1,4-dihydroxy-2-naphthoate biosynthesis; 1,4-dihydroxy-2-naphthoate from chorismate: step 2/7. Its pathway is quinol/quinone metabolism; menaquinone biosynthesis. Its function is as follows. Catalyzes the thiamine diphosphate-dependent decarboxylation of 2-oxoglutarate and the subsequent addition of the resulting succinic semialdehyde-thiamine pyrophosphate anion to isochorismate to yield 2-succinyl-5-enolpyruvyl-6-hydroxy-3-cyclohexene-1-carboxylate (SEPHCHC). This is 2-succinyl-5-enolpyruvyl-6-hydroxy-3-cyclohexene-1-carboxylate synthase from Shewanella halifaxensis (strain HAW-EB4).